A 364-amino-acid polypeptide reads, in one-letter code: Gap junction delta-4 protein (364 aa).

The Cytoplasmic segment spans residues Met1 to Thr19. The chain crosses the membrane as a helical span at residues Ile20–Ala40. Over Gly41–Arg76 the chain is Extracellular. Residues Phe77–Leu97 traverse the membrane as a helical segment. Residues His98–Arg128 lie on the Cytoplasmic side of the membrane. The chain crosses the membrane as a helical span at residues Met129 to Ala149. The Extracellular segment spans residues Arg150 to Ser173. Residues Leu174–Leu194 traverse the membrane as a helical segment. Residues Leu195–Val364 lie on the Cytoplasmic side of the membrane. The span at His331 to Lys340 shows a compositional bias: polar residues. Positions His331–Val364 are disordered.

Belongs to the connexin family. Delta-type subfamily. A connexon is composed of a hexamer of connexins.

It is found in the cell membrane. Its subcellular location is the cell junction. The protein resides in the gap junction. In terms of biological role, one gap junction consists of a cluster of closely packed pairs of transmembrane channels, the connexons, through which materials of low MW diffuse from one cell to a neighboring cell. In Mus musculus (Mouse), this protein is Gap junction delta-4 protein (Gjd4).